The chain runs to 451 residues: Vitamin D3 receptor (451 aa).

A DNA-binding region (nuclear receptor) is located at residues 44-112 (PRICGVCGDR…RLKRCVDIGM (69 aa)). Zn(2+)-binding residues include Cys47, Cys50, Cys64, Cys67, Cys83, Cys89, Cys99, and Cys102. NR C4-type zinc fingers lie at residues 47–67 (CGVCGDRATGFHFNAMTCEGC) and 83–107 (CPFNGDCKITKDNRRHCQACRLKRC). Hinge stretches follow at residues 113–149 (MKEFILTDEEVQRKREMILKRKEEEALKESLKPKLSE) and 120–149 (DEEVQRKREMILKRKEEEALKESLKPKLSE). One can recognise an NR LBD domain in the interval 150-447 (EQQKVIDTLL…LTPLVLEVFG (298 aa)). Ser261 provides a ligand contact to calcitriol. Residues 270–288 (KMIPGFRDLTAEDQIALLK) form an interaction with coactivator LXXLL motif region. Arg298, Ser302, His329, and His421 together coordinate calcitriol. Residues 440 to 448 (PLVLEVFGN) carry the 9aaTAD motif.

This sequence belongs to the nuclear hormone receptor family. NR1 subfamily. Homodimer in the absence of bound vitamin D3. Heterodimer with RXRA after vitamin D3 binding. Expressed in kidney and intestine.

Its subcellular location is the nucleus. The protein resides in the cytoplasm. In terms of biological role, nuclear receptor for calcitriol, the active form of vitamin D3 which mediates the action of this vitamin on cells. Enters the nucleus upon vitamin D3 binding where it forms heterodimers with the retinoid X receptor/RXR. The VDR-RXR heterodimers bind to specific response elements on DNA and activate the transcription of vitamin D3-responsive target genes. Plays a central role in calcium homeostasis. Also functions as a receptor for the secondary bile acid lithocholic acid (LCA) and its metabolites. In Gallus gallus (Chicken), this protein is Vitamin D3 receptor (VDR).